An 855-amino-acid polypeptide reads, in one-letter code: DNA mismatch repair protein MutS (855 aa).

616 to 623 (GPNMGGKS) contributes to the ATP binding site.

It belongs to the DNA mismatch repair MutS family.

Functionally, this protein is involved in the repair of mismatches in DNA. It is possible that it carries out the mismatch recognition step. This protein has a weak ATPase activity. The chain is DNA mismatch repair protein MutS from Escherichia coli O139:H28 (strain E24377A / ETEC).